Consider the following 415-residue polypeptide: 1-deoxy-D-xylulose 5-phosphate reductoisomerase (415 aa).

Positions 10, 11, 12, 13, 36, 37, 38, and 128 each coordinate NADPH. Position 129 (K129) interacts with 1-deoxy-D-xylulose 5-phosphate. E130 contacts NADPH. D154 provides a ligand contact to Mn(2+). The 1-deoxy-D-xylulose 5-phosphate site is built by S155, E156, S192, and H215. E156 provides a ligand contact to Mn(2+). Residue G221 participates in NADPH binding. The 1-deoxy-D-xylulose 5-phosphate site is built by S228, N233, K234, and E237. E237 lines the Mn(2+) pocket.

Belongs to the DXR family. Mg(2+) is required as a cofactor. Mn(2+) serves as cofactor.

It carries out the reaction 2-C-methyl-D-erythritol 4-phosphate + NADP(+) = 1-deoxy-D-xylulose 5-phosphate + NADPH + H(+). Its pathway is isoprenoid biosynthesis; isopentenyl diphosphate biosynthesis via DXP pathway; isopentenyl diphosphate from 1-deoxy-D-xylulose 5-phosphate: step 1/6. Functionally, catalyzes the NADPH-dependent rearrangement and reduction of 1-deoxy-D-xylulose-5-phosphate (DXP) to 2-C-methyl-D-erythritol 4-phosphate (MEP). The chain is 1-deoxy-D-xylulose 5-phosphate reductoisomerase from Synechococcus sp. (strain CC9605).